The chain runs to 921 residues: AdoMet-dependent rRNA methyltransferase SPB1 (921 aa).

G58, W60, D78, D94, and D119 together coordinate S-adenosyl-L-methionine. The active-site Proton acceptor is the K159. Residues 367-414 (VEEMDEDDQIDDELARLNEEAARKARKERRRKNELRQKKILKMQLQMT) are a coiled coil. 5 disordered regions span residues 448 to 476 (ALIQ…DPET), 491 to 604 (EFKQ…KRSL), 635 to 713 (ELDE…GKQK), 814 to 835 (LEKA…EKEK), and 866 to 921 (RGLK…GPRN). Positions 491–522 (EFKQKQSERDAKFRAKQARLQDAKNDSWHGIK) are enriched in basic and acidic residues. 4 stretches are compositionally biased toward acidic residues: residues 523 to 542 (DDEE…ESEG), 555 to 568 (ETFD…EEDE), 635 to 684 (ELDE…DDFE), and 697 to 708 (DEEWDLNGEDEE). Residues 796-835 (IKKVAEAKARKKMRTLRRLEKAQKKAETINENEDISEKEK) are a coiled coil. Residues 814 to 823 (LEKAQKKAET) are compositionally biased toward basic and acidic residues. The segment covering 868–879 (LKGRPKGTKGRY) has biased composition (basic residues). The span at 880 to 892 (KMVDPRMKKELRA) shows a compositional bias: basic and acidic residues.

This sequence belongs to the class I-like SAM-binding methyltransferase superfamily. RNA methyltransferase RlmE family. SPB1 subfamily. Component of the nucleolar and nucleoplasmic pre-60S ribosomal particle.

Its subcellular location is the nucleus. It localises to the nucleolus. The catalysed reaction is a ribonucleotide in rRNA + S-adenosyl-L-methionine = a 2'-O-methylribonucleotide in rRNA + S-adenosyl-L-homocysteine + H(+). Its function is as follows. Required for proper assembly of pre-ribosomal particles during the biogenesis of the 60S ribosomal subunit. The protein is AdoMet-dependent rRNA methyltransferase SPB1 of Mycosarcoma maydis (Corn smut fungus).